Reading from the N-terminus, the 385-residue chain is Enoyl-[acyl-carrier-protein] reductase, mitochondrial (385 aa).

Tyrosine 78 serves as the catalytic Proton donor. NADP(+) contacts are provided by residues asparagine 162, 190 to 193 (TSGV), 213 to 215 (RDR), 288 to 291 (YGGM), 313 to 315 (YWV), and lysine 378.

It belongs to the zinc-containing alcohol dehydrogenase family. Quinone oxidoreductase subfamily. In terms of assembly, homodimer.

Its subcellular location is the mitochondrion matrix. The catalysed reaction is a 2,3-saturated acyl-[ACP] + NADP(+) = a (2E)-enoyl-[ACP] + NADPH + H(+). Functionally, catalyzes the NADPH-dependent reduction of trans-2-enoyl thioesters in mitochondrial fatty acid synthesis (fatty acid synthesis type II). Fatty acid chain elongation in mitochondria uses acyl carrier protein (ACP) as an acyl group carrier, but the enzyme accepts both ACP and CoA thioesters as substrates in vitro. Required for respiration and the maintenance of the mitochondrial compartment. The polypeptide is Enoyl-[acyl-carrier-protein] reductase, mitochondrial (ETR1) (Candida glabrata (strain ATCC 2001 / BCRC 20586 / JCM 3761 / NBRC 0622 / NRRL Y-65 / CBS 138) (Yeast)).